The following is a 243-amino-acid chain: Thiocyanate hydrolase subunit gamma (243 aa).

Positions 128, 131, 132, and 133 each coordinate Co(3+). Cys-131 bears the Cysteine sulfinic acid (-SO2H) mark. Position 133 is a cysteine sulfenic acid (-SOH) (Cys-133).

It belongs to the nitrile hydratase subunit alpha family. As to quaternary structure, heterododecamer consisting of 4 alpha, 4 beta, and 4 gamma subunits. The cofactor is Co(3+).

It carries out the reaction thiocyanate + H2O + 2 H(+) = carbonyl sulfide + NH4(+). The protein operates within organosulfur degradation; thiocyanate degradation. Involved in the degradation of thiocyanate. This Thiobacillus thioparus protein is Thiocyanate hydrolase subunit gamma (scnC).